A 425-amino-acid polypeptide reads, in one-letter code: Protein CLP1 homolog (425 aa).

Residues glutamate 18, lysine 59, and 121-126 (DVGKST) each bind ATP.

The protein belongs to the Clp1 family. Clp1 subfamily.

The protein resides in the nucleus. Required for endonucleolytic cleavage during polyadenylation-dependent pre-mRNA 3'-end formation. The polypeptide is Protein CLP1 homolog (cbc) (Drosophila persimilis (Fruit fly)).